The primary structure comprises 1235 residues: Major DNA-binding protein (1235 aa).

The segment at Gly-536–Gly-584 is disordered. Over residues Gly-545–Gly-584 the composition is skewed to gly residues. A Required for filament formation motif is present at residues Phe-846–Trp-847. Gly residues predominate over residues Gly-1214–Gly-1226. Positions Gly-1214 to Leu-1235 are disordered. The required for nuclear localization stretch occupies residues Arg-1232–Leu-1235.

It belongs to the herpesviridae major DNA-binding protein family. Homooligomers. Forms double-helical filaments necessary for the formation of replication compartments within the host nucleus. Interacts with the origin-binding protein. Interacts with the helicase primase complex; this interaction stimulates primer synthesis activity of the helicase-primase complex. Interacts with the DNA polymerase. Interacts with the alkaline exonuclease; this interaction increases its nuclease processivity.

It is found in the host nucleus. Its function is as follows. Plays several crucial roles in viral infection. Participates in the opening of the viral DNA origin to initiate replication by interacting with the origin-binding protein. May disrupt loops, hairpins and other secondary structures present on ssDNA to reduce and eliminate pausing of viral DNA polymerase at specific sites during elongation. Promotes viral DNA recombination by performing strand-transfer, characterized by the ability to transfer a DNA strand from a linear duplex to a complementary single-stranded DNA circle. Can also catalyze the renaturation of complementary single strands. Additionally, reorganizes the host cell nucleus, leading to the formation of prereplicative sites and replication compartments. This process is driven by the protein which can form double-helical filaments in the absence of DNA. The polypeptide is Major DNA-binding protein (Homo sapiens (Human)).